A 334-amino-acid polypeptide reads, in one-letter code: Replication factor C small subunit (334 aa).

49–56 (GPPGVGKT) contacts ATP.

Belongs to the activator 1 small subunits family. RfcS subfamily. In terms of assembly, heteromultimer composed of small subunits (RfcS) and large subunits (RfcL).

Part of the RFC clamp loader complex which loads the PCNA sliding clamp onto DNA. The polypeptide is Replication factor C small subunit (Methanosarcina barkeri (strain Fusaro / DSM 804)).